The following is a 91-amino-acid chain: Small ribosomal subunit protein uS15 (91 aa).

It belongs to the universal ribosomal protein uS15 family. Part of the 30S ribosomal subunit. Forms a bridge to the 50S subunit in the 70S ribosome, contacting the 23S rRNA.

Its function is as follows. One of the primary rRNA binding proteins, it binds directly to 16S rRNA where it helps nucleate assembly of the platform of the 30S subunit by binding and bridging several RNA helices of the 16S rRNA. Functionally, forms an intersubunit bridge (bridge B4) with the 23S rRNA of the 50S subunit in the ribosome. In Nautilia profundicola (strain ATCC BAA-1463 / DSM 18972 / AmH), this protein is Small ribosomal subunit protein uS15.